A 221-amino-acid chain; its full sequence is Iron-sulfur cluster repair protein YtfE (221 aa).

This sequence belongs to the RIC family. YtfE subfamily. Homodimer.

The protein localises to the cytoplasm. In terms of biological role, di-iron-containing protein involved in the repair of iron-sulfur clusters damaged by oxidative and nitrosative stress conditions. This Edwardsiella ictaluri (strain 93-146) protein is Iron-sulfur cluster repair protein YtfE.